A 517-amino-acid chain; its full sequence is UDP-N-acetylmuramoyl-tripeptide--D-alanyl-D-alanine ligase (517 aa).

138–144 is a binding site for ATP; that stretch reads GSSGKTS.

This sequence belongs to the MurCDEF family. MurF subfamily.

The protein resides in the cytoplasm. It catalyses the reaction D-alanyl-D-alanine + UDP-N-acetyl-alpha-D-muramoyl-L-alanyl-gamma-D-glutamyl-meso-2,6-diaminopimelate + ATP = UDP-N-acetyl-alpha-D-muramoyl-L-alanyl-gamma-D-glutamyl-meso-2,6-diaminopimeloyl-D-alanyl-D-alanine + ADP + phosphate + H(+). It participates in cell wall biogenesis; peptidoglycan biosynthesis. Involved in cell wall formation. Catalyzes the final step in the synthesis of UDP-N-acetylmuramoyl-pentapeptide, the precursor of murein. In Mycobacterium leprae (strain TN), this protein is UDP-N-acetylmuramoyl-tripeptide--D-alanyl-D-alanine ligase.